The sequence spans 215 residues: 3,4-dihydroxy-2-butanone 4-phosphate synthase (215 aa).

D-ribulose 5-phosphate contacts are provided by residues 38–39 (RE), aspartate 43, 151–155 (RRGHT), and glutamate 175. Glutamate 39 contacts Mg(2+). Residue histidine 154 coordinates Mg(2+).

This sequence belongs to the DHBP synthase family. In terms of assembly, homodimer. Mg(2+) serves as cofactor. Requires Mn(2+) as cofactor.

The enzyme catalyses D-ribulose 5-phosphate = (2S)-2-hydroxy-3-oxobutyl phosphate + formate + H(+). It functions in the pathway cofactor biosynthesis; riboflavin biosynthesis; 2-hydroxy-3-oxobutyl phosphate from D-ribulose 5-phosphate: step 1/1. Its function is as follows. Catalyzes the conversion of D-ribulose 5-phosphate to formate and 3,4-dihydroxy-2-butanone 4-phosphate. This is 3,4-dihydroxy-2-butanone 4-phosphate synthase from Haemophilus influenzae (strain ATCC 51907 / DSM 11121 / KW20 / Rd).